A 430-amino-acid chain; its full sequence is Enolase (430 aa).

Position 163 (Q163) interacts with (2R)-2-phosphoglycerate. E205 serves as the catalytic Proton donor. Residues D242, E287, and D314 each contribute to the Mg(2+) site. 4 residues coordinate (2R)-2-phosphoglycerate: K339, R368, S369, and K390. The active-site Proton acceptor is the K339.

This sequence belongs to the enolase family. The cofactor is Mg(2+).

The protein localises to the cytoplasm. Its subcellular location is the secreted. It localises to the cell surface. It carries out the reaction (2R)-2-phosphoglycerate = phosphoenolpyruvate + H2O. Its pathway is carbohydrate degradation; glycolysis; pyruvate from D-glyceraldehyde 3-phosphate: step 4/5. In terms of biological role, catalyzes the reversible conversion of 2-phosphoglycerate (2-PG) into phosphoenolpyruvate (PEP). It is essential for the degradation of carbohydrates via glycolysis. The polypeptide is Enolase (Bacillus cytotoxicus (strain DSM 22905 / CIP 110041 / 391-98 / NVH 391-98)).